A 310-amino-acid chain; its full sequence is uncharacterized protein (310 aa).

One can recognise an HTH lysR-type domain in the interval F5–T62. Positions F22–R42 form a DNA-binding region, H-T-H motif.

It belongs to the LysR transcriptional regulatory family.

This is an uncharacterized protein from Escherichia coli (strain K12).